The chain runs to 424 residues: Piriformospora indica-insensitive protein 2 (424 aa).

Positions 1–21 (MLWQTFFSSLLLLSLLFGCNG) are cleaved as a signal peptide. 10 LRR repeats span residues 141–166 (ASNL…IGNL), 167–190 (TKLK…ICNL), 191–213 (KRLK…CFKG), 214–237 (LKEL…SFGD), 238–263 (LVSL…GFLK), 265–286 (LTLL…IENI), 287–311 (QSLT…NWGK), 312–336 (MSNL…LTNL), 337–360 (KRLR…KLEA), and 362–387 (PCLG…FYEK).

The protein localises to the cell membrane. In terms of biological role, required for growth promotion and enhanced seed production mediated by the endophytic fungus Piriformospora indica. The protein is Piriformospora indica-insensitive protein 2 (PII-2) of Arabidopsis thaliana (Mouse-ear cress).